The chain runs to 112 residues: UPF0102 protein TTHA0372 (112 aa).

The protein belongs to the UPF0102 family.

The polypeptide is UPF0102 protein TTHA0372 (Thermus thermophilus (strain ATCC 27634 / DSM 579 / HB8)).